Here is a 318-residue protein sequence, read N- to C-terminus: Ubiquitin-like domain-containing CTD phosphatase 1 (318 aa).

Positions 3–81 constitute a Ubiquitin-like domain; it reads LSLIIKWGGQ…IMMMGTREES (79 aa). The 162-residue stretch at 133–294 folds into the FCP1 homology domain; the sequence is PREGKKLLVL…VKLSQYLKEI (162 aa). Mg(2+) is bound by residues D143, D145, and D253.

It depends on Mg(2+) as a cofactor.

The protein localises to the nucleus. The enzyme catalyses O-phospho-L-seryl-[protein] + H2O = L-seryl-[protein] + phosphate. The catalysed reaction is O-phospho-L-threonyl-[protein] + H2O = L-threonyl-[protein] + phosphate. Dephosphorylates 26S nuclear proteasomes, thereby decreasing their proteolytic activity. Recruited to the 19S regulatory particle of the 26S proteasome where it dephosphorylates 19S component psmc2 which impairs psmc2 ATPase activity and disrupts 26S proteasome assembly. Has also been reported to stimulate the proteolytic activity of the 26S proteasome. The sequence is that of Ubiquitin-like domain-containing CTD phosphatase 1 (ublcp1) from Xenopus laevis (African clawed frog).